The primary structure comprises 222 residues: Kinetochore protein Spc25 (222 aa).

Residues 51 to 100 (RHQRKVGKLQKVIMERREELDKRVSFIEELDRELEATKLRSLAMKDRIKQ) are a coiled coil.

The protein belongs to the SPC25 family. In terms of assembly, component of the Ndc80 complex, which is composed of Ndc80, Nuf2 and Spc25.

The protein localises to the nucleus. It localises to the chromosome. It is found in the centromere. Its subcellular location is the kinetochore. Acts as a component of the essential kinetochore-associated Ndc80 complex, which is required for chromosome segregation and spindle checkpoint activity during meiosis and mitosis. Required for kinetochore integrity and the organization of stable microtubule binding sites in the outer plate of the kinetochore. Participates in SAC signaling that responds specifically to disruptions in spindle microtubule dynamics. The NDC80 complex synergistically enhances the affinity of the SKA1 complex for microtubules and may allow the NDC80 complex to track depolymerizing microtubules. This is Kinetochore protein Spc25 from Drosophila sechellia (Fruit fly).